A 385-amino-acid chain; its full sequence is Linearmycin resistance permease protein LnrN (385 aa).

Transmembrane regions (helical) follow at residues 22-42 (YLIMFAAPLLLTFVFGSMLSG), 198-218 (AAGFSILFVMLTMMGAAGTIL), 239-259 (IGAGYVLSFFVIGWIQFGILL), 274-294 (AAVIVLVSLFLLTVVGIGLMI), 305-325 (LAFGNLFVIATCMVSGMYWPI), and 360-380 (DILGICGILLAFAAITFAAGL). One can recognise an ABC transmembrane type-2 domain in the interval 163 to 382 (KTVFAKKHED…AITFAAGLKA (220 aa)).

Belongs to the ABC-2 integral membrane protein family. As to quaternary structure, the complex is composed of two ATP-binding proteins (LnrL) and two transmembrane proteins (LnrM and LnrN).

The protein resides in the cell membrane. Its function is as follows. Required for resistance to linearmycins, a family of antibiotic-specialized metabolites produced by some streptomycetes. Part of the ABC transporter complex LnrLMN that probably facilitates linearmycin removal from the membrane. Responsible for the translocation of the substrate across the membrane. Also mediates KinC-dependent biofilm morphology. The protein is Linearmycin resistance permease protein LnrN of Bacillus subtilis (strain 168).